A 65-amino-acid polypeptide reads, in one-letter code: Large ribosomal subunit protein uL29 (65 aa).

The protein belongs to the universal ribosomal protein uL29 family.

In Paracidovorax citrulli (strain AAC00-1) (Acidovorax citrulli), this protein is Large ribosomal subunit protein uL29.